We begin with the raw amino-acid sequence, 308 residues long: Acetyl-coenzyme A carboxylase carboxyl transferase subunit beta (308 aa).

The 270-residue stretch at 25–294 folds into the CoA carboxyltransferase N-terminal domain; sequence VWTKCTSCEQ…PLVVSVNDAP (270 aa). Zn(2+)-binding residues include Cys29, Cys32, Cys48, and Cys51. Residues 29–51 form a C4-type zinc finger; that stretch reads CTSCEQVLYYAELERNLEVCPKC.

Belongs to the AccD/PCCB family. Acetyl-CoA carboxylase is a heterohexamer composed of biotin carboxyl carrier protein (AccB), biotin carboxylase (AccC) and two subunits each of ACCase subunit alpha (AccA) and ACCase subunit beta (AccD). Zn(2+) serves as cofactor.

It is found in the cytoplasm. It carries out the reaction N(6)-carboxybiotinyl-L-lysyl-[protein] + acetyl-CoA = N(6)-biotinyl-L-lysyl-[protein] + malonyl-CoA. It functions in the pathway lipid metabolism; malonyl-CoA biosynthesis; malonyl-CoA from acetyl-CoA: step 1/1. Component of the acetyl coenzyme A carboxylase (ACC) complex. Biotin carboxylase (BC) catalyzes the carboxylation of biotin on its carrier protein (BCCP) and then the CO(2) group is transferred by the transcarboxylase to acetyl-CoA to form malonyl-CoA. The sequence is that of Acetyl-coenzyme A carboxylase carboxyl transferase subunit beta from Vibrio cholerae serotype O1 (strain ATCC 39315 / El Tor Inaba N16961).